Consider the following 160-residue polypeptide: Phosphopantetheine adenylyltransferase (160 aa).

Residue S9 coordinates substrate. Residues 9-10 (SF) and H17 contribute to the ATP site. The substrate site is built by K41, L73, and K87. ATP contacts are provided by residues 88–90 (GLR), E98, and 123–129 (YGYLSSS).

This sequence belongs to the bacterial CoaD family. As to quaternary structure, homohexamer. Mg(2+) is required as a cofactor.

The protein localises to the cytoplasm. The enzyme catalyses (R)-4'-phosphopantetheine + ATP + H(+) = 3'-dephospho-CoA + diphosphate. The protein operates within cofactor biosynthesis; coenzyme A biosynthesis; CoA from (R)-pantothenate: step 4/5. Its function is as follows. Reversibly transfers an adenylyl group from ATP to 4'-phosphopantetheine, yielding dephospho-CoA (dPCoA) and pyrophosphate. In Caldanaerobacter subterraneus subsp. tengcongensis (strain DSM 15242 / JCM 11007 / NBRC 100824 / MB4) (Thermoanaerobacter tengcongensis), this protein is Phosphopantetheine adenylyltransferase.